The following is a 324-amino-acid chain: Dolichyl-phosphate beta-glucosyltransferase (324 aa).

At 1 to 7 (MATLLLQ) the chain is on the lumenal side. Residues 8 to 28 (LLGLGVALAAAALILVSIVAF) traverse the membrane as a helical segment. Topologically, residues 29–324 (ITATKMPPCY…WRLKQTRKAS (296 aa)) are cytoplasmic.

Belongs to the glycosyltransferase 2 family.

Its subcellular location is the endoplasmic reticulum membrane. It catalyses the reaction a di-trans,poly-cis-dolichyl phosphate + UDP-alpha-D-glucose = a di-trans,poly-cis-dolichyl beta-D-glucosyl phosphate + UDP. Its pathway is protein modification; protein glycosylation. Functionally, dolichyl-phosphate beta-glucosyltransferase that operates in the biosynthetic pathway of dolichol-linked oligosaccharides, the glycan precursors employed in protein asparagine (N)-glycosylation. The assembly of dolichol-linked oligosaccharides begins on the cytosolic side of the endoplasmic reticulum membrane and finishes in its lumen. The sequential addition of sugars to dolichol pyrophosphate produces dolichol-linked oligosaccharides containing fourteen sugars, including two GlcNAcs, nine mannoses and three glucoses. Once assembled, the oligosaccharide is transferred from the lipid to nascent proteins by oligosaccharyltransferases. Dolichyl-phosphate beta-glucosyltransferase produces dolichyl beta-D-glucosyl phosphate/Dol-P-Glc, the glucose donor substrate used sequentially by ALG6, ALG8 and ALG10 to add glucose residues on top of the Man(9)GlcNAc(2)-PP-Dol structure. These are the three last steps in the biosynthetic pathway of dolichol-linked oligosaccharides to produce Glc(3)Man(9)GlcNAc(2)-PP-Dol. The enzyme is most probably active on the cytoplasmic side of the endoplasmic reticulum while its product Dol-P-Glc is the substrate for ALG6, ALG8 and ALG11 in the lumen of the endoplasmic reticulum. The protein is Dolichyl-phosphate beta-glucosyltransferase of Mus musculus (Mouse).